Here is a 1109-residue protein sequence, read N- to C-terminus: Hybrid signal transduction histidine kinase F (1109 aa).

In terms of domain architecture, PAC spans 237–289 (LSTETTITKKNGEKYPAEVFVKEISDIHSNSIGIMIIVRDITDQIRLKEMNIE). The region spanning 324–547 (TISHEIRTPL…LFSVTLNFEQ (224 aa)) is the Histidine kinase domain. Histidine 327 bears the Phosphohistidine; by autocatalysis mark. Residues 719-760 (SNLIQTISQIDNQQQQQQQQLQQQEQEQQHQQQQLQQEQQFV) adopt a coiled-coil conformation. Over residues 739-758 (LQQQEQEQQHQQQQLQQEQQ) the composition is skewed to low complexity. The interval 739-819 (LQQQEQEQQH…TSSDSGESDE (81 aa)) is disordered. A compositionally biased stretch (basic and acidic residues) spans 767 to 782 (DSSEKKTTPKKDRGKY). The region spanning 928-1048 (RILLVDDNAV…PLGELVKKYL (121 aa)) is the Response regulatory domain. The residue at position 977 (aspartate 977) is a 4-aspartylphosphate. Low complexity predominate over residues 1052–1099 (NNNNNNNNNNNNNNNNNSNNNNSNSNSNPNSNSNSNSNSNSNPNQNPN). A disordered region spans residues 1052–1109 (NNNNNNNNNNNNNNNNNSNNNNSNSNSNPNSNSNSNSNSNSNPNQNPNYCNNLPTDFI). The segment covering 1100 to 1109 (YCNNLPTDFI) has biased composition (polar residues).

It carries out the reaction ATP + protein L-histidine = ADP + protein N-phospho-L-histidine.. Functionally, acts as a receptor histidine kinase for a signal transduction pathway. This protein undergoes an ATP-dependent autophosphorylation at a conserved histidine residue in the kinase core, and a phosphoryl group is then transferred to a conserved aspartate residue in the receiver domain. The protein is Hybrid signal transduction histidine kinase F (dhkF) of Dictyostelium discoideum (Social amoeba).